The following is a 119-amino-acid chain: Ig heavy chain V region T601 (119 aa).

Residues 1–112 (EVKLLESGGG…GYFDVWGAGT (112 aa)) enclose the Ig-like domain.

The chain is Ig heavy chain V region T601 from Mus musculus (Mouse).